The primary structure comprises 182 residues: IQ domain-containing protein F1 (182 aa).

Composition is skewed to basic and acidic residues over residues 1–10 and 31–43; these read MGEEQQKPEE and ETEK…KQEL. Residues 1–43 are disordered; the sequence is MGEEQQKPEELNAPTDDAPQEKQQPADLSSETEKAKSKKKQEL. IQ domains follow at residues 45-74 and 101-130; these read EKDQ…SAWI and EQWA…AVRT.

Interacts with calmodulin. As to expression, specifically expressed in testes and mature spermatozoa (at protein level).

It is found in the cytoplasmic vesicle. Its subcellular location is the secretory vesicle. It localises to the acrosome. Its function is as follows. Involved in sperm capacitation and acrosome reaction. The polypeptide is IQ domain-containing protein F1 (Mus musculus (Mouse)).